The following is a 101-amino-acid chain: Small ribosomal subunit protein uS14 (101 aa).

It belongs to the universal ribosomal protein uS14 family. As to quaternary structure, part of the 30S ribosomal subunit. Contacts proteins S3 and S10.

Binds 16S rRNA, required for the assembly of 30S particles and may also be responsible for determining the conformation of the 16S rRNA at the A site. The protein is Small ribosomal subunit protein uS14 of Chlamydia trachomatis serovar L2 (strain ATCC VR-902B / DSM 19102 / 434/Bu).